The sequence spans 648 residues: Threonine--tRNA ligase (648 aa).

A TGS domain is found at 1–61 (MIKITLPDGS…TTDGSLVLYT (61 aa)). Residues 240–539 (DHRKLGKELE…LLEHTAGNFP (300 aa)) are catalytic. 3 residues coordinate Zn(2+): cysteine 335, histidine 386, and histidine 516.

Belongs to the class-II aminoacyl-tRNA synthetase family. As to quaternary structure, homodimer. Zn(2+) is required as a cofactor.

It is found in the cytoplasm. It carries out the reaction tRNA(Thr) + L-threonine + ATP = L-threonyl-tRNA(Thr) + AMP + diphosphate + H(+). Catalyzes the attachment of threonine to tRNA(Thr) in a two-step reaction: L-threonine is first activated by ATP to form Thr-AMP and then transferred to the acceptor end of tRNA(Thr). Also edits incorrectly charged L-seryl-tRNA(Thr). This chain is Threonine--tRNA ligase, found in Flavobacterium psychrophilum (strain ATCC 49511 / DSM 21280 / CIP 103535 / JIP02/86).